We begin with the raw amino-acid sequence, 202 residues long: Imidazoleglycerol-phosphate dehydratase (202 aa).

This sequence belongs to the imidazoleglycerol-phosphate dehydratase family. As to quaternary structure, homotrimer.

The catalysed reaction is D-erythro-1-(imidazol-4-yl)glycerol 3-phosphate = 3-(imidazol-4-yl)-2-oxopropyl phosphate + H2O. The protein operates within amino-acid biosynthesis; L-histidine biosynthesis; L-histidine from 5-phospho-alpha-D-ribose 1-diphosphate: step 6/9. The chain is Imidazoleglycerol-phosphate dehydratase (HIS3) from Cryptococcus neoformans var. neoformans serotype D (strain B-3501A) (Filobasidiella neoformans).